A 102-amino-acid polypeptide reads, in one-letter code: uncharacterized protein (102 aa).

3 helical membrane-spanning segments follow: residues isoleucine 14–alanine 34, valine 35–isoleucine 55, and isoleucine 76–isoleucine 96.

It localises to the cell membrane. This is an uncharacterized protein from Methanocaldococcus jannaschii (strain ATCC 43067 / DSM 2661 / JAL-1 / JCM 10045 / NBRC 100440) (Methanococcus jannaschii).